A 137-amino-acid polypeptide reads, in one-letter code: Proofreading thioesterase EntH (137 aa).

The active-site Nucleophile or proton acceptor is glutamate 63.

The protein belongs to the thioesterase PaaI family. In terms of assembly, homotetramer. Dimer of dimers. Interacts specifically with the aryl carrier protein (ArCP) domain of EntB.

Its subcellular location is the cytoplasm. It participates in siderophore biosynthesis; enterobactin biosynthesis. Required for optimal enterobactin synthesis. Acts as a proofreading enzyme that prevents EntB misacylation by hydrolyzing the thioester bound existing between EntB and wrongly charged molecules. In Escherichia coli O157:H7 (strain EC4115 / EHEC), this protein is Proofreading thioesterase EntH.